A 915-amino-acid polypeptide reads, in one-letter code: Copper-exporting P-type ATPase (915 aa).

2 consecutive HMA domains span residues Asn11–Gly72 and Thr73–Ile134. Cu(+) is bound by residues Cys22, Cys25, Cys84, and Cys87. Positions Phe142–Ala169 are disordered. Over residues Ala158–Ala169 the composition is skewed to polar residues. Residues Gln172–Glu236 form the HMA 3 domain. Cu(+)-binding residues include Cys183 and Cys186. Transmembrane regions (helical) follow at residues Leu265 to Ile285, Val293 to Phe313, Thr329 to Pro349, Val359 to Thr379, Leu474 to Val494, Val514 to Gly534, and Tyr541 to Ala561. Asp598 serves as the catalytic 4-aspartylphosphate intermediate. Residues Asp796 and Asp800 each contribute to the Mg(2+) site. Transmembrane regions (helical) follow at residues Ala801–Ile821 and Ile865–Ala885.

Belongs to the cation transport ATPase (P-type) (TC 3.A.3) family. Type IB subfamily.

Its subcellular location is the cell membrane. It carries out the reaction Cu(+)(in) + ATP + H2O = Cu(+)(out) + ADP + phosphate + H(+). Involved in copper export. In Vibrio cholerae serotype O1 (strain ATCC 39315 / El Tor Inaba N16961), this protein is Copper-exporting P-type ATPase (copA).